Reading from the N-terminus, the 285-residue chain is Tryptophan synthase alpha chain (285 aa).

Catalysis depends on proton acceptor residues Glu-53 and Asp-64.

This sequence belongs to the TrpA family. Tetramer of two alpha and two beta chains.

It catalyses the reaction (1S,2R)-1-C-(indol-3-yl)glycerol 3-phosphate + L-serine = D-glyceraldehyde 3-phosphate + L-tryptophan + H2O. The protein operates within amino-acid biosynthesis; L-tryptophan biosynthesis; L-tryptophan from chorismate: step 5/5. Functionally, the alpha subunit is responsible for the aldol cleavage of indoleglycerol phosphate to indole and glyceraldehyde 3-phosphate. The polypeptide is Tryptophan synthase alpha chain (Bordetella bronchiseptica (strain ATCC BAA-588 / NCTC 13252 / RB50) (Alcaligenes bronchisepticus)).